Consider the following 150-residue polypeptide: Large ribosomal subunit protein bL9 (150 aa).

The protein belongs to the bacterial ribosomal protein bL9 family.

Functionally, binds to the 23S rRNA. The polypeptide is Large ribosomal subunit protein bL9 (Streptococcus sanguinis (strain SK36)).